A 232-amino-acid chain; its full sequence is tRNA1(Val) (adenine(37)-N6)-methyltransferase (232 aa).

The protein belongs to the methyltransferase superfamily. tRNA (adenine-N(6)-)-methyltransferase family.

The protein localises to the cytoplasm. It carries out the reaction adenosine(37) in tRNA1(Val) + S-adenosyl-L-methionine = N(6)-methyladenosine(37) in tRNA1(Val) + S-adenosyl-L-homocysteine + H(+). Functionally, specifically methylates the adenine in position 37 of tRNA(1)(Val) (anticodon cmo5UAC). The sequence is that of tRNA1(Val) (adenine(37)-N6)-methyltransferase from Pseudoalteromonas translucida (strain TAC 125).